Consider the following 256-residue polypeptide: Dihydroorotate dehydrogenase B (NAD(+)), electron transfer subunit (256 aa).

In terms of domain architecture, FAD-binding FR-type spans I2–L100. FAD contacts are provided by residues R51 to S54, I68 to R70, and G75 to T76. [2Fe-2S] cluster is bound by residues C220, C225, C228, and C243.

It belongs to the PyrK family. Heterotetramer of 2 PyrK and 2 PyrD type B subunits. [2Fe-2S] cluster serves as cofactor. It depends on FAD as a cofactor.

It participates in pyrimidine metabolism; UMP biosynthesis via de novo pathway; orotate from (S)-dihydroorotate (NAD(+) route): step 1/1. In terms of biological role, responsible for channeling the electrons from the oxidation of dihydroorotate from the FMN redox center in the PyrD type B subunit to the ultimate electron acceptor NAD(+). This Streptococcus pneumoniae (strain ATCC BAA-255 / R6) protein is Dihydroorotate dehydrogenase B (NAD(+)), electron transfer subunit.